The following is a 437-amino-acid chain: CCA-adding enzyme (437 aa).

Residues Ser47 and Arg50 each contribute to the ATP site. The CTP site is built by Ser47 and Arg50. Mg(2+) contacts are provided by Glu59, Asp61, and Asp110. The ATP site is built by His133, Lys152, and Tyr161. CTP-binding residues include His133, Lys152, and Tyr161.

Belongs to the tRNA nucleotidyltransferase/poly(A) polymerase family. Archaeal CCA-adding enzyme subfamily. As to quaternary structure, homodimer. Mg(2+) is required as a cofactor.

It carries out the reaction a tRNA precursor + 2 CTP + ATP = a tRNA with a 3' CCA end + 3 diphosphate. The enzyme catalyses a tRNA with a 3' CCA end + 2 CTP + ATP = a tRNA with a 3' CCACCA end + 3 diphosphate. In terms of biological role, catalyzes the addition and repair of the essential 3'-terminal CCA sequence in tRNAs without using a nucleic acid template. Adds these three nucleotides in the order of C, C, and A to the tRNA nucleotide-73, using CTP and ATP as substrates and producing inorganic pyrophosphate. tRNA 3'-terminal CCA addition is required both for tRNA processing and repair. Also involved in tRNA surveillance by mediating tandem CCA addition to generate a CCACCA at the 3' terminus of unstable tRNAs. While stable tRNAs receive only 3'-terminal CCA, unstable tRNAs are marked with CCACCA and rapidly degraded. The structural flexibility of RNA controls the choice between CCA versus CCACCA addition: following the first CCA addition cycle, nucleotide-binding to the active site triggers a clockwise screw motion, producing torque on the RNA. This ejects stable RNAs, whereas unstable RNAs are refolded while bound to the enzyme and subjected to a second CCA catalytic cycle. The chain is CCA-adding enzyme from Archaeoglobus fulgidus (strain ATCC 49558 / DSM 4304 / JCM 9628 / NBRC 100126 / VC-16).